The sequence spans 210 residues: N-(5'-phosphoribosyl)anthranilate isomerase (210 aa).

The protein belongs to the TrpF family.

The catalysed reaction is N-(5-phospho-beta-D-ribosyl)anthranilate = 1-(2-carboxyphenylamino)-1-deoxy-D-ribulose 5-phosphate. The protein operates within amino-acid biosynthesis; L-tryptophan biosynthesis; L-tryptophan from chorismate: step 3/5. The polypeptide is N-(5'-phosphoribosyl)anthranilate isomerase (TRP1) (Eremothecium gossypii (strain ATCC 10895 / CBS 109.51 / FGSC 9923 / NRRL Y-1056) (Yeast)).